Consider the following 354-residue polypeptide: Methylthioribose-1-phosphate isomerase (354 aa).

Asp-246 functions as the Proton donor in the catalytic mechanism.

This sequence belongs to the eIF-2B alpha/beta/delta subunits family. MtnA subfamily.

Its subcellular location is the cytoplasm. It is found in the nucleus. It carries out the reaction 5-(methylsulfanyl)-alpha-D-ribose 1-phosphate = 5-(methylsulfanyl)-D-ribulose 1-phosphate. Its pathway is amino-acid biosynthesis; L-methionine biosynthesis via salvage pathway; L-methionine from S-methyl-5-thio-alpha-D-ribose 1-phosphate: step 1/6. Its function is as follows. Catalyzes the interconversion of methylthioribose-1-phosphate (MTR-1-P) into methylthioribulose-1-phosphate (MTRu-1-P). The protein is Methylthioribose-1-phosphate isomerase (mri1) of Xenopus laevis (African clawed frog).